Here is a 654-residue protein sequence, read N- to C-terminus: Fructose-1,6-bisphosphatase class 3 (654 aa).

A disordered region spans residues 288–307 (NPAFKPKKRPDKHERLTQRE). Over residues 298 to 307 (DKHERLTQRE) the composition is skewed to basic and acidic residues.

Belongs to the FBPase class 3 family. Mn(2+) serves as cofactor.

It carries out the reaction beta-D-fructose 1,6-bisphosphate + H2O = beta-D-fructose 6-phosphate + phosphate. It participates in carbohydrate biosynthesis; gluconeogenesis. The polypeptide is Fructose-1,6-bisphosphatase class 3 (Staphylococcus aureus (strain USA300)).